Reading from the N-terminus, the 238-residue chain is 2-C-methyl-D-erythritol 4-phosphate cytidylyltransferase (238 aa).

It belongs to the IspD/TarI cytidylyltransferase family. IspD subfamily.

It catalyses the reaction 2-C-methyl-D-erythritol 4-phosphate + CTP + H(+) = 4-CDP-2-C-methyl-D-erythritol + diphosphate. Its pathway is isoprenoid biosynthesis; isopentenyl diphosphate biosynthesis via DXP pathway; isopentenyl diphosphate from 1-deoxy-D-xylulose 5-phosphate: step 2/6. In terms of biological role, catalyzes the formation of 4-diphosphocytidyl-2-C-methyl-D-erythritol from CTP and 2-C-methyl-D-erythritol 4-phosphate (MEP). The polypeptide is 2-C-methyl-D-erythritol 4-phosphate cytidylyltransferase (Aliivibrio fischeri (strain MJ11) (Vibrio fischeri)).